The sequence spans 721 residues: BBSome complex member BBS2 (721 aa).

A coiled-coil region spans residues 325-369 (KGNLLDTSVEQDLIRELSQKKQNLLLELRNYEESTKAELSSPLNE).

In terms of assembly, part of BBSome complex, that contains BBS1, BBS2, BBS4, BBS5, BBS7, BBS8/TTC8, BBS9 and BBIP10. Interacts (via C-terminus) with BBS7. Interacts (via coiled coil domain) with MKKS. Interacts with CCDC28B. Interacts with DLEC1.

It localises to the cell projection. It is found in the cilium membrane. Its subcellular location is the cytoplasm. The protein resides in the cytoskeleton. The protein localises to the microtubule organizing center. It localises to the centrosome. It is found in the centriolar satellite. The BBSome complex is thought to function as a coat complex required for sorting of specific membrane proteins to the primary cilia. The BBSome complex is required for ciliogenesis but is dispensable for centriolar satellite function. This ciliogenic function is mediated in part by the Rab8 GDP/GTP exchange factor, which localizes to the basal body and contacts the BBSome. Rab8(GTP) enters the primary cilium and promotes extension of the ciliary membrane. Firstly the BBSome associates with the ciliary membrane and binds to RAB3IP/Rabin8, the guanosyl exchange factor (GEF) for Rab8 and then the Rab8-GTP localizes to the cilium and promotes docking and fusion of carrier vesicles to the base of the ciliary membrane. The BBSome complex, together with the LTZL1, controls SMO ciliary trafficking and contributes to the sonic hedgehog (SHH) pathway regulation. Required for proper BBSome complex assembly and its ciliary localization. The chain is BBSome complex member BBS2 (Bbs2) from Mus musculus (Mouse).